The primary structure comprises 930 residues: Polypeptide N-acetylgalactosaminyltransferase 5 (930 aa).

Residues Met-1–Gly-12 lie on the Cytoplasmic side of the membrane. A helical; Signal-anchor for type II membrane protein transmembrane segment spans residues Arg-13–Leu-35. At Ser-36–Val-930 the chain is on the lumenal side. A disordered region spans residues Gly-163–Arg-210. Residue Asn-178 is glycosylated (N-linked (GlcNAc...) asparagine). Basic and acidic residues predominate over residues Thr-180 to Ala-193. Over residues Tyr-197–Arg-210 the composition is skewed to polar residues. N-linked (GlcNAc...) asparagine glycosylation is found at Asn-198 and Asn-213. Ser-285 carries the phosphoserine modification. Asn-287 and Asn-309 each carry an N-linked (GlcNAc...) asparagine glycan. The tract at residues Leu-344–Leu-377 is disordered. N-linked (GlcNAc...) asparagine glycans are attached at residues Asn-387 and Asn-403. 3 cysteine pairs are disulfide-bonded: Cys-476/Cys-708, Cys-699/Cys-779, and Cys-812/Cys-825. The segment at Leu-485–Arg-594 is catalytic subdomain A. Substrate contacts are provided by Asp-526 and Arg-555. Residue Asn-568 is glycosylated (N-linked (GlcNAc...) asparagine). Asp-578 contacts Mn(2+). Ser-579 is a binding site for substrate. His-580 provides a ligand contact to Mn(2+). The segment at Ile-654–Arg-716 is catalytic subdomain B. A substrate-binding site is contributed by Trp-685. His-713 provides a ligand contact to Mn(2+). Arg-716 and Tyr-721 together coordinate substrate. N-linked (GlcNAc...) asparagine glycosylation is found at Asn-766, Asn-817, and Asn-835. The 132-residue stretch at Lys-794–Glu-925 folds into the Ricin B-type lectin domain. 2 cysteine pairs are disulfide-bonded: Cys-848–Cys-863 and Cys-898–Cys-913. Asn-902 carries an N-linked (GlcNAc...) asparagine glycan.

Belongs to the glycosyltransferase 2 family. GalNAc-T subfamily. Interacts with EXT2. Does not interact with EXT1, EXTL1 or EXTL3. Mn(2+) is required as a cofactor. Predominantly expressed in sublingual gland. Expressed at lower level in stomach and small intestine. Weakly or not expressed in submandibular gland, parotid gland, kidney, liver, heart, brain, spleen, lung, skeletal muscle, testis, ovary, cervix and uterus.

The protein localises to the golgi apparatus membrane. The catalysed reaction is L-seryl-[protein] + UDP-N-acetyl-alpha-D-galactosamine = a 3-O-[N-acetyl-alpha-D-galactosaminyl]-L-seryl-[protein] + UDP + H(+). The enzyme catalyses L-threonyl-[protein] + UDP-N-acetyl-alpha-D-galactosamine = a 3-O-[N-acetyl-alpha-D-galactosaminyl]-L-threonyl-[protein] + UDP + H(+). The protein operates within protein modification; protein glycosylation. Its function is as follows. Catalyzes the initial reaction in O-linked oligosaccharide biosynthesis, the transfer of an N-acetyl-D-galactosamine residue to a serine or threonine residue on the protein receptor. Has activity toward EA2 peptide substrate, but has a weak activity toward Muc2, Muc1b, rMuc-2 or mG-Muc substrates. The sequence is that of Polypeptide N-acetylgalactosaminyltransferase 5 (Galnt5) from Rattus norvegicus (Rat).